Consider the following 674-residue polypeptide: Probable nucleolar GTP-binding protein 1 (674 aa).

The region spanning 169 to 346 (RTLLLTGYPN…VKDTACSILF (178 aa)) is the OBG-type G domain. GTP-binding positions include 175 to 182 (GYPNVGKS), 221 to 225 (DTPGI), and 289 to 292 (NKID). Positions 518 to 527 (RINHQIKDSS) are enriched in basic and acidic residues. Disordered regions lie at residues 518–538 (RINHQIKDSSKPQLSKGRRGI) and 564–674 (VRDH…NDFR). Over residues 570–580 (SRISGKKRSRS) the composition is skewed to basic residues. Composition is skewed to basic and acidic residues over residues 619–633 (GFHDLAQKEKADKLD) and 641–653 (NQDGRKGESDRHV).

It belongs to the TRAFAC class OBG-HflX-like GTPase superfamily. OBG GTPase family. NOG subfamily.

The protein localises to the nucleus. Its subcellular location is the nucleolus. In terms of biological role, involved in the biogenesis of the 60S ribosomal subunit. The protein is Probable nucleolar GTP-binding protein 1 (nog1) of Dictyostelium discoideum (Social amoeba).